Consider the following 708-residue polypeptide: Leukotoxin translocation ATP-binding protein LktB (708 aa).

Positions 1 to 126 (MEANHQRNDL…ACYQGQLILV (126 aa)) constitute a Peptidase C39 domain. Positions 155-437 (FLETLIVSIF…LAQLWQDFQQ (283 aa)) constitute an ABC transmembrane type-1 domain. A run of 5 helical transmembrane segments spans residues 159-179 (LIVS…FQVV), 192-212 (LNII…LSGL), 270-290 (ALTS…MWYY), 296-316 (LVIL…SPIL), and 389-409 (VMVI…LSIG). Positions 469–704 (ISFKNIRFRY…SNGLYSYLHQ (236 aa)) constitute an ABC transporter domain. Residue 503–510 (GRSGSGKS) participates in ATP binding.

The protein belongs to the ABC transporter superfamily. Protein-1 exporter (TC 3.A.1.109) family. In terms of assembly, homodimer.

Its subcellular location is the cell inner membrane. The enzyme catalyses ATP + H2O + proteinSide 1 = ADP + phosphate + proteinSide 2.. Its function is as follows. Part of the ABC transporter complex LktBD involved in leukotoxin export. Transmembrane domains (TMD) form a pore in the inner membrane and the ATP-binding domain (NBD) is responsible for energy generation. The protein is Leukotoxin translocation ATP-binding protein LktB (lktB) of Mannheimia haemolytica (Pasteurella haemolytica).